A 24-amino-acid polypeptide reads, in one-letter code: Humanin-like 6 (24 aa).

Belongs to the humanin family. In terms of tissue distribution, expressed in skeletal muscle and testis.

The protein resides in the secreted. Its subcellular location is the cytoplasm. Functionally, plays a role as a neuroprotective and antiapoptotic factor. The sequence is that of Humanin-like 6 from Homo sapiens (Human).